Consider the following 430-residue polypeptide: MTTIAKILAREILDSRGNPTLEAEVTLDDGSFGRAAVPSGASTGTKEAVELRDGDKTRYLGKGVRHAVDNVNGTIAETLKNFDAADQQGLDRRLIDLDGTENKGRLGANALLGVSLAAAHAVAASRKQPLWQYLSTITESDVALPVPMMNIINGGAHADNNVDFQEFMVLPVGCSSFSEALRAGTEIFHSLKSVLKGHGLSTAVGDEGGFAPDFRSNVEALDTILEAIGKAGYTAGEDILLGLDVASSEFYDNGKYNLVGENKRLTSEQFVDFLADWVAQYPIISIEDGLAEDDWAGWKLLTERVGKKVQLVGDDLFVTNPKIFKQGIDSGTANAILIKVNQIGTLTETLEAIAMAHAAHYASIVSHRSGETEDTTIADIAVATTATQIKTGSLCRSDRVAKYNQLLRIEQALGSGARYAGRDAFVSLKR.

Glutamine 165 provides a ligand contact to (2R)-2-phosphoglycerate. The active-site Proton donor is the glutamate 207. 3 residues coordinate Mg(2+): aspartate 244, glutamate 287, and aspartate 314. The (2R)-2-phosphoglycerate site is built by lysine 339, arginine 368, serine 369, and lysine 390. The active-site Proton acceptor is lysine 339.

The protein belongs to the enolase family. As to quaternary structure, component of the RNA degradosome, a multiprotein complex involved in RNA processing and mRNA degradation. It depends on Mg(2+) as a cofactor.

The protein resides in the cytoplasm. Its subcellular location is the secreted. The protein localises to the cell surface. It catalyses the reaction (2R)-2-phosphoglycerate = phosphoenolpyruvate + H2O. Its pathway is carbohydrate degradation; glycolysis; pyruvate from D-glyceraldehyde 3-phosphate: step 4/5. Catalyzes the reversible conversion of 2-phosphoglycerate (2-PG) into phosphoenolpyruvate (PEP). It is essential for the degradation of carbohydrates via glycolysis. In Xanthomonas euvesicatoria pv. vesicatoria (strain 85-10) (Xanthomonas campestris pv. vesicatoria), this protein is Enolase.